Reading from the N-terminus, the 219-residue chain is MTYEKNIPNATAKRLSLYYRIFKRFHRENIVKTSSKQIAEAIGIDPATVRRDFSYFGELGRRGFGYDVSKLMTFFAELLNDNATTKVALVGVGNIGRALLHYRFQERNRMQLVMAFDTDDNELVGSQTEDNIPIYGISQIKDKIAQEDIKTAILTVPSVKAQEVAELLVDAGIEGILCFSPVNLNLPRHVVLQYVDLTSELQTLLYFMKEEEKARRNND.

A DNA-binding region (H-T-H motif) is located at residues 17–56 (LYYRIFKRFHRENIVKTSSKQIAEAIGIDPATVRRDFSYF). 91 to 96 (GVGNIG) contacts NAD(+).

Belongs to the transcriptional regulatory Rex family. Homodimer.

It localises to the cytoplasm. Functionally, modulates transcription in response to changes in cellular NADH/NAD(+) redox state. This chain is Redox-sensing transcriptional repressor Rex, found in Streptococcus thermophilus (strain ATCC BAA-491 / LMD-9).